Reading from the N-terminus, the 324-residue chain is Hairy/enhancer-of-split related with YRPW motif protein 2 (324 aa).

A disordered region spans residues 1-34 (MKRPCEDSTSDSDMDETIDVGSENNYSGQSNGSF). Over residues 8 to 18 (STSDSDMDETI) the composition is skewed to acidic residues. Residues 22–34 (SENNYSGQSNGSF) show a composition bias toward polar residues. Residues 48–103 (ARKKRRGIIEKRRRDRINNSLSELRRLVPTAFEKQGSAKLEKAEILQMTVDHLKML) form the bHLH domain. The Orange domain occupies 122-157 (LSIGFRECLTEVARYLSSVEGLDSSDPLRVRLVSHL). Residues 294-311 (SSSVSTSTTSQQSSGSSS) show a composition bias toward low complexity. The segment at 294 to 324 (SSSVSTSTTSQQSSGSSSKPYRPWGTEVGAF) is disordered. The YRPW motif motif lies at 314 to 317 (YRPW).

The protein belongs to the HEY family.

Its subcellular location is the nucleus. In terms of biological role, transcriptional repressor. Downstream effector of Notch signaling which regulates cell fate choice in angioblasts. Represses the venous cell fate, thereby promoting the arterial cell fate and aorta formation. The polypeptide is Hairy/enhancer-of-split related with YRPW motif protein 2 (hey2) (Danio rerio (Zebrafish)).